An 87-amino-acid polypeptide reads, in one-letter code: Defensin-like protein 218 (87 aa).

The N-terminal stretch at 1-19 is a signal peptide; it reads MKTIVCFLTILILVSSCES. 3 cysteine pairs are disulfide-bonded: C51–C70, C54–C75, and C58–C77.

The protein belongs to the DEFL family.

The protein localises to the secreted. This chain is Defensin-like protein 218, found in Arabidopsis thaliana (Mouse-ear cress).